The following is a 114-amino-acid chain: MASYKVNIPAGPLWSNAEAQQVGPKIAAAHQGNFTGQWTTVVESAMSVVEVELQVENTGIHEFKTDVLAGPLWSNDEAQKLGPQIAASYGAEFTGQWRTIVEGVMSVIQIKYTF.

Repeat unit 1 spans residues 2 to 55; that stretch reads ASYKVNIPAGPLWSNAEAQQVGPKIAAAHQGNFTGQWTTVVESAMSVVEVELQV. A carbohydrate-binding positions include 12-16, glutamine 20, and 36-44; these read PLWSN and GQWTTVVES. Residues 56–60 form a linker region; the sequence is ENTGI. The stretch at 61-114 is repeat 2; that stretch reads HEFKTDVLAGPLWSNDEAQKLGPQIAASYGAEFTGQWRTIVEGVMSVIQIKYTF. A carbohydrate-binding positions include 71–75, glutamine 79, and 95–103; these read PLWSN and GQWRTIVEG.

In terms of assembly, homodimer.

Its subcellular location is the cytoplasm. Functionally, carbohydrate-binding protein that binds oligomannosides such as Man(6)GlcNAc(2) with sub-micromolar affinities. The specificity of MVL is unique in that its minimal target comprises the Man-alpha-(1-&gt;6)-Man-beta-(1-&gt;4)-GlcNAc-beta-(1-&gt;4)-GlcNAc tetrasaccharide core (Man(2)A) found in N-linked oligomannosides. Displays hemagglutininating activity on rabbit, horse and hen erythrocytes. This activity is inhibited by yeast mannan. Does not bind mono- and disaccharides. Inhibits HIV-1 envelope-mediated cell fusion at nanomolar concentrations through carbohydrate-mediated interactions with high-mannose residues on the surface of the HIV envelope glycoprotein gp120. Unexpectedly for a lectin, one of the 2 oligomannose binding sites of MVL can catalyze the cleavage of chitin fragments (such as chitotriose, i.e. GlcNAc(3) or GlcNAc-beta-(1-&gt;4)-GlcNAcbeta-(1-&gt;4)-GlcNAc, and chitotetraose, i.e. GlcNAc(4)) to GlcNAc. This weak beta-1,4-glycosidase activity is restricted to the C-terminal carbohydrate-binding site. Does not cleave Man(3)GlcNAc(2) or the tetrasaccharide Man(2)A. In Microcystis viridis (Polycystis viridis), this protein is Lectin MVL (mvl).